The following is a 218-amino-acid chain: Adenylate kinase (218 aa).

Residue 10–15 (GAGKGT) participates in ATP binding. Residues 30-59 (STGDMLRAAVKAGTPLGIEAKKVMDSGGLV) form an NMP region. AMP is bound by residues Thr-31, Arg-36, 57–59 (GLV), 85–88 (GFPR), and Gln-92. Residues 122-159 (GRRSHSASGRTYHVKYNPPKVEGLDDVTGEPLIQREDD) are LID. ATP contacts are provided by residues Arg-123 and 132–133 (TY). Positions 156 and 167 each coordinate AMP. Gly-203 contacts ATP.

It belongs to the adenylate kinase family. In terms of assembly, monomer.

It is found in the cytoplasm. The catalysed reaction is AMP + ATP = 2 ADP. It functions in the pathway purine metabolism; AMP biosynthesis via salvage pathway; AMP from ADP: step 1/1. In terms of biological role, catalyzes the reversible transfer of the terminal phosphate group between ATP and AMP. Plays an important role in cellular energy homeostasis and in adenine nucleotide metabolism. This Polaromonas naphthalenivorans (strain CJ2) protein is Adenylate kinase.